The following is a 151-amino-acid chain: MESPIRIETVDINTILKTLPHRYPFLLIDRVVNIRQDYSGIGIKNVSFNEPAFLGHFPERPVFPGVLMIEGMAQTAGVIGIMSVEGTEKPRAVYFLTIDKCKFRKPVLPGDTIEYHMKSIGRRKSMWWFHGDAKVNGVVVAEADVGAMLTD.

Residue His56 is part of the active site.

The protein belongs to the thioester dehydratase family. FabZ subfamily.

It localises to the cytoplasm. It catalyses the reaction a (3R)-hydroxyacyl-[ACP] = a (2E)-enoyl-[ACP] + H2O. In terms of biological role, involved in unsaturated fatty acids biosynthesis. Catalyzes the dehydration of short chain beta-hydroxyacyl-ACPs and long chain saturated and unsaturated beta-hydroxyacyl-ACPs. The polypeptide is 3-hydroxyacyl-[acyl-carrier-protein] dehydratase FabZ (Rhodopseudomonas palustris (strain BisB18)).